Consider the following 204-residue polypeptide: MLRVALAKGRLLKSFIEYLQQVNQIDIATVLLNRQRQLLLTVDNIEMILVKGSDVPTYVEQGIADVGIVGSDILNGQKYNINKLLDLPFGKCHFALAAKPETSRYKKVATSYVHTATQFFNKEGMDVEVIHLNGSVELSCVVDMVDAIVDIVQTGSTLTANGLVEKKHISEINAKLITNKESYFKQSSEIERLIKQLGVSINYA.

The protein belongs to the ATP phosphoribosyltransferase family. Short subfamily. In terms of assembly, heteromultimer composed of HisG and HisZ subunits.

It is found in the cytoplasm. It carries out the reaction 1-(5-phospho-beta-D-ribosyl)-ATP + diphosphate = 5-phospho-alpha-D-ribose 1-diphosphate + ATP. It participates in amino-acid biosynthesis; L-histidine biosynthesis; L-histidine from 5-phospho-alpha-D-ribose 1-diphosphate: step 1/9. Its function is as follows. Catalyzes the condensation of ATP and 5-phosphoribose 1-diphosphate to form N'-(5'-phosphoribosyl)-ATP (PR-ATP). Has a crucial role in the pathway because the rate of histidine biosynthesis seems to be controlled primarily by regulation of HisG enzymatic activity. The chain is ATP phosphoribosyltransferase from Staphylococcus epidermidis (strain ATCC 35984 / DSM 28319 / BCRC 17069 / CCUG 31568 / BM 3577 / RP62A).